Reading from the N-terminus, the 894-residue chain is MGIQTAAANDVAQHTPMMQQYLRIKADHPGTLVFYRMGDFYELFFEDAEKAARLLDLTLTQRGASAGNPIKMAGVPHHAVEQYLAKLVKLGESVAICEQIGDPATSKGPVERKVVRVVTPGTLTDAALLSDKSDVYLLAMCVAHNRRGVATSVGLAWLNLASGALRLAEVAPDQVAAALERIRPAEILVADTPSDSASWTPPVNAGALTRVPVWHFDVTSGTQRLCDQLEVAGLDGFGAHSLTCACGAAGALLLYAAATQGQQLRHVRSLKVEYESEYIGLDPATRRNLELTETLRGTESPTLCSLLDTCCTTMGSRLLRHWLHHPPRESAVAQARQQAIGALLDAPPGASIDSLRGALRQISDIERITGRLALLSARPRDLSSLRDTFIALPELRTQVAAVAPNADSLARIDASLEPPQACVELLKRAVAQEPSAMVRDGGVIARGYDAELDELRDISENCGQFLIDLETRERARTGIGNLRVEYNKVHGFYIEVTRGQTDKVPDDYRRRQTLKNAERYITPELKTFEDKALSAQERALARERSLYDALLQALLPFIPDCQRVASALAELDLLAAFGERARALDWVAPTFSANAGIEIEQGRHPVVEAQVEQFIANDCSLTPERKLLLITGPNMGGKSTFMRQTALIALLAYVGSYVPARRAAFGPIDRIFTRIGAADDLAGGRSTFMVEMTEAAAILNDATPQSLVLMDEIGRGTSTFDGLALAWAIARHLLAHNGCHTLFATHYFELTQLPAEFPQAANVHLSAVEHGHGIVFLHAVSEGPANQSYGLQVAQLAGVPNAVIRAARKHLAHLEQQSAAQPAPQLDLFATPMPMLLEDADDERDAKAEPAVPPAMQELVERLRGIDPNDLRPREALDLLYELHELAAAPDADH.

Position 632–639 (632–639 (GPNMGGKS)) interacts with ATP.

This sequence belongs to the DNA mismatch repair MutS family.

Functionally, this protein is involved in the repair of mismatches in DNA. It is possible that it carries out the mismatch recognition step. This protein has a weak ATPase activity. The polypeptide is DNA mismatch repair protein MutS (Paraburkholderia phytofirmans (strain DSM 17436 / LMG 22146 / PsJN) (Burkholderia phytofirmans)).